A 706-amino-acid chain; its full sequence is Translation factor GUF1 homolog, mitochondrial (706 aa).

Positions 89 to 272 (SRIRNFSIIA…SIVKNVPPPQ (184 aa)) constitute a tr-type G domain. GTP-binding positions include 98–105 (AHIDHGKS), 165–169 (DTPGH), and 219–222 (NKID).

Belongs to the TRAFAC class translation factor GTPase superfamily. Classic translation factor GTPase family. LepA subfamily.

The protein resides in the mitochondrion inner membrane. The catalysed reaction is GTP + H2O = GDP + phosphate + H(+). Functionally, promotes mitochondrial protein synthesis. May act as a fidelity factor of the translation reaction, by catalyzing a one-codon backward translocation of tRNAs on improperly translocated ribosomes. Binds to mitochondrial ribosomes in a GTP-dependent manner. The chain is Translation factor GUF1 homolog, mitochondrial from Thalassiosira pseudonana (Marine diatom).